A 105-amino-acid chain; its full sequence is Thioredoxin (105 aa).

A Thioredoxin domain is found at Met1–Ile105. Cys30 and Cys33 are disulfide-bonded.

Belongs to the thioredoxin family.

In terms of biological role, component of the thioredoxin-thioredoxin reductase system. Participates in various redox reactions through the reversible oxidation of its active center dithiol to a disulfide and catalyzes dithiol-disulfide exchange reactions. The protein is Thioredoxin (trxA) of Rickettsia prowazekii (strain Madrid E).